We begin with the raw amino-acid sequence, 387 residues long: 3-dehydroquinate synthase (387 aa).

The protein belongs to the archaeal-type DHQ synthase family.

It catalyses the reaction 2-amino-2,3,7-trideoxy-D-lyxo-hept-6-ulosonate + NAD(+) + H2O = 3-dehydroquinate + NH4(+) + NADH + H(+). In terms of biological role, catalyzes the oxidative deamination and cyclization of 2-amino-3,7-dideoxy-D-threo-hept-6-ulosonic acid (ADH) to yield 3-dehydroquinate (DHQ), which is fed into the canonical shikimic pathway of aromatic amino acid biosynthesis. This is 3-dehydroquinate synthase from Halobacterium salinarum (strain ATCC 29341 / DSM 671 / R1).